Reading from the N-terminus, the 89-residue chain is Small ribosomal subunit protein uS15 (89 aa).

Belongs to the universal ribosomal protein uS15 family. As to quaternary structure, part of the 30S ribosomal subunit. Forms a bridge to the 50S subunit in the 70S ribosome, contacting the 23S rRNA.

One of the primary rRNA binding proteins, it binds directly to 16S rRNA where it helps nucleate assembly of the platform of the 30S subunit by binding and bridging several RNA helices of the 16S rRNA. In terms of biological role, forms an intersubunit bridge (bridge B4) with the 23S rRNA of the 50S subunit in the ribosome. This Shewanella sp. (strain ANA-3) protein is Small ribosomal subunit protein uS15.